A 130-amino-acid chain; its full sequence is Small ribosomal subunit protein uS11c (130 aa).

It belongs to the universal ribosomal protein uS11 family. As to quaternary structure, part of the 30S ribosomal subunit.

It is found in the plastid. It localises to the chloroplast. The polypeptide is Small ribosomal subunit protein uS11c (Chlorella vulgaris (Green alga)).